Consider the following 480-residue polypeptide: Probable glycosyltransferase 2 (480 aa).

Gly residues predominate over residues 1–21; sequence MGQEGMGYNNGKGGGGGGGGL. A disordered region spans residues 1 to 45; that stretch reads MGQEGMGYNNGKGGGGGGGGLPMTAPRPRGASPLSSHGHHHRSRK. Residues 1 to 49 lie on the Cytoplasmic side of the membrane; that stretch reads MGQEGMGYNNGKGGGGGGGGLPMTAPRPRGASPLSSHGHHHRSRKIHRT. Residues 50 to 72 form a helical; Signal-anchor for type II membrane protein membrane-spanning segment; the sequence is FNNVKITVLCGLVTILVLRGTIG. At 73 to 480 the chain is on the lumenal side; sequence LNLSLPNQPT…DVKAKISTTS (408 aa). N-linked (GlcNAc...) asparagine glycans are attached at residues Asn74, Asn124, Asn129, and Asn458.

This sequence belongs to the glycosyltransferase 34 family.

Its subcellular location is the golgi apparatus membrane. Functionally, probable glycosyltransferase that may be involved in the biosynthesis of xyloglucan. The sequence is that of Probable glycosyltransferase 2 from Oryza sativa subsp. indica (Rice).